A 173-amino-acid polypeptide reads, in one-letter code: Zinc finger matrin-type protein 5 (173 aa).

The C3H1-type zinc finger occupies 51 to 79; that stretch reads ERSKEVCRKFVQTGQCVFGTSCRFSHMSE. Positions 83 to 111 are disordered; that stretch reads KMLEQKIDDEKRQKEDPDQDGSSERSVDE.

Component of the U11/U12 snRNPs that are part of the U12-type spliceosome.

It is found in the nucleus. This chain is Zinc finger matrin-type protein 5 (zmat5), found in Danio rerio (Zebrafish).